A 119-amino-acid polypeptide reads, in one-letter code: Ribonuclease (119 aa).

The substrate site is built by Lys6 and Arg9. His11 acts as the Proton acceptor in catalysis. 3 cysteine pairs are disulfide-bonded: Cys26–Cys81, Cys40–Cys92, and Cys58–Cys107. Residues 41 to 45 (KFTNT) and Arg82 contribute to the substrate site. Catalysis depends on His114, which acts as the Proton donor.

The protein belongs to the pancreatic ribonuclease family. As to quaternary structure, monomer. Interacts with and forms tight 1:1 complexes with RNH1. Dimerization of two such complexes may occur. Interaction with RNH1 inhibits this protein.

The protein localises to the secreted. It carries out the reaction an [RNA] containing cytidine + H2O = an [RNA]-3'-cytidine-3'-phosphate + a 5'-hydroxy-ribonucleotide-3'-[RNA].. The enzyme catalyses an [RNA] containing uridine + H2O = an [RNA]-3'-uridine-3'-phosphate + a 5'-hydroxy-ribonucleotide-3'-[RNA].. Its function is as follows. Endonuclease that catalyzes the cleavage of RNA on the 3' side of pyrimidine nucleotides. Acts on single-stranded and double-stranded RNA. In Chelonia mydas (Green sea-turtle), this protein is Ribonuclease.